The sequence spans 243 residues: Putative ABC transporter arginine-binding protein 2 (243 aa).

An N-terminal signal peptide occupies residues 1–19 (MKKVLIAALIAGFSLSATA).

This sequence belongs to the bacterial solute-binding protein 3 family. As to quaternary structure, the complex is composed of two ATP-binding proteins (ArtP), two transmembrane proteins (ArtM and ArtQ) and two solute-binding proteins (ArtJ and ArtI).

It is found in the periplasm. Part of the ABC transporter complex ArtPIQMJ involved in arginine transport. This Escherichia coli (strain K12) protein is Putative ABC transporter arginine-binding protein 2 (artI).